A 433-amino-acid chain; its full sequence is Gamma-glutamyl phosphate reductase (433 aa).

The protein belongs to the gamma-glutamyl phosphate reductase family.

The protein resides in the cytoplasm. It catalyses the reaction L-glutamate 5-semialdehyde + phosphate + NADP(+) = L-glutamyl 5-phosphate + NADPH + H(+). The protein operates within amino-acid biosynthesis; L-proline biosynthesis; L-glutamate 5-semialdehyde from L-glutamate: step 2/2. Its function is as follows. Catalyzes the NADPH-dependent reduction of L-glutamate 5-phosphate into L-glutamate 5-semialdehyde and phosphate. The product spontaneously undergoes cyclization to form 1-pyrroline-5-carboxylate. This is Gamma-glutamyl phosphate reductase from Cyanothece sp. (strain PCC 7425 / ATCC 29141).